Here is a 341-residue protein sequence, read N- to C-terminus: HTH-type transcriptional repressor PurR (341 aa).

An HTH lacI-type domain is found at 2 to 56 (ATIKDVAKRAGVSTTTVSHVINKTRFVADETKAAVWEAIKELHYSPSAVARSLKV). Positions 4-23 (IKDVAKRAGVSTTTVSHVIN) form a DNA-binding region, H-T-H motif. Residues 48 to 56 (SAVARSLKV) mediate DNA binding. Residues Y73, R190, T192, F221, and D275 each coordinate hypoxanthine.

In terms of assembly, homodimer.

It functions in the pathway purine metabolism; purine nucleotide biosynthesis [regulation]. Functionally, is the main repressor of the genes involved in the de novo synthesis of purine nucleotides, regulating purB, purC, purEK, purF, purHD, purL, purMN and guaBA expression. PurR is allosterically activated to bind its cognate DNA by binding the purine corepressors, hypoxanthine or guanine, thereby effecting transcription repression. The polypeptide is HTH-type transcriptional repressor PurR (Edwardsiella ictaluri (strain 93-146)).